The chain runs to 170 residues: Protein SprT (170 aa).

Residues 23–165 (QLANQHLGTD…RECGEKLQFV (143 aa)) enclose the SprT-like domain. His-78 contacts Zn(2+). Residue Glu-79 is part of the active site. Position 82 (His-82) interacts with Zn(2+).

Belongs to the SprT family. Zn(2+) serves as cofactor.

It is found in the cytoplasm. The chain is Protein SprT from Yersinia enterocolitica serotype O:8 / biotype 1B (strain NCTC 13174 / 8081).